The following is a 252-amino-acid chain: tRNA (guanine-N(7)-)-methyltransferase (252 aa).

4 residues coordinate S-adenosyl-L-methionine: E51, D76, N103, and D125. D125 is an active-site residue. Residues K129, D159, and 199-202 (TYYE) contribute to the substrate site.

It belongs to the class I-like SAM-binding methyltransferase superfamily. TrmB family.

The enzyme catalyses guanosine(46) in tRNA + S-adenosyl-L-methionine = N(7)-methylguanosine(46) in tRNA + S-adenosyl-L-homocysteine. It functions in the pathway tRNA modification; N(7)-methylguanine-tRNA biosynthesis. Catalyzes the formation of N(7)-methylguanine at position 46 (m7G46) in tRNA. The protein is tRNA (guanine-N(7)-)-methyltransferase of Bacteroides thetaiotaomicron (strain ATCC 29148 / DSM 2079 / JCM 5827 / CCUG 10774 / NCTC 10582 / VPI-5482 / E50).